The primary structure comprises 75 residues: Translation initiation factor IF-1, chloroplastic (75 aa).

The protein belongs to the IF-1 family. As to quaternary structure, component of the 30S ribosomal translation pre-initiation complex which assembles on the 30S ribosome in the order IF-2 and IF-3, IF-1 and N-formylmethionyl-tRNA(fMet); mRNA recruitment can occur at any time during PIC assembly.

The protein resides in the plastid. Its subcellular location is the chloroplast. Its function is as follows. One of the essential components for the initiation of protein synthesis. Stabilizes the binding of IF-2 and IF-3 on the 30S subunit to which N-formylmethionyl-tRNA(fMet) subsequently binds. Helps modulate mRNA selection, yielding the 30S pre-initiation complex (PIC). Upon addition of the 50S ribosomal subunit IF-1, IF-2 and IF-3 are released leaving the mature 70S translation initiation complex. The chain is Translation initiation factor IF-1, chloroplastic (infA) from Cucumis sativus (Cucumber).